The sequence spans 340 residues: Manganese-dependent ADP-ribose/CDP-alcohol diphosphatase (340 aa).

Residue methionine 1 is modified to N-acetylmethionine. 7 residues coordinate Zn(2+): aspartate 25, glutamine 27, aspartate 74, asparagine 110, histidine 241, histidine 278, and histidine 280.

This sequence belongs to the ADPRibase-Mn family. As to quaternary structure, monomer. The cofactor is Mg(2+).

It carries out the reaction CDP-choline + H2O = phosphocholine + CMP + 2 H(+). The catalysed reaction is ADP-D-ribose + H2O = D-ribose 5-phosphate + AMP + 2 H(+). The enzyme catalyses CDP-glycerol + H2O = sn-glycerol 3-phosphate + CMP + 2 H(+). Its function is as follows. Hydrolyzes ADP-ribose, IDP-ribose, CDP-glycerol, CDP-choline and CDP-ethanolamine, but not other non-reducing ADP-sugars or CDP-glucose. May be involved in immune cell signaling as suggested by the second-messenger role of ADP-ribose, which activates TRPM2 as a mediator of oxidative/nitrosative stress. In Mus musculus (Mouse), this protein is Manganese-dependent ADP-ribose/CDP-alcohol diphosphatase (Adprm).